The primary structure comprises 404 residues: Argininosuccinate synthase (404 aa).

ATP-binding positions include 10-18 and A38; that span reads AYSGGVDTS. Y89 serves as a coordination point for L-citrulline. G119 provides a ligand contact to ATP. Residues T121, N125, and D126 each coordinate L-aspartate. Residue N125 coordinates L-citrulline. The L-citrulline site is built by R129, S177, S186, E262, and Y274.

It belongs to the argininosuccinate synthase family. Type 1 subfamily. As to quaternary structure, homotetramer.

The protein resides in the cytoplasm. It carries out the reaction L-citrulline + L-aspartate + ATP = 2-(N(omega)-L-arginino)succinate + AMP + diphosphate + H(+). It participates in amino-acid biosynthesis; L-arginine biosynthesis; L-arginine from L-ornithine and carbamoyl phosphate: step 2/3. The polypeptide is Argininosuccinate synthase (Prochlorococcus marinus (strain MIT 9215)).